Consider the following 388-residue polypeptide: Flavin-dependent monooxygenase (388 aa).

FAD is bound by residues 26 to 27 and 45 to 48; these read PV and YERD. R54 is a binding site for NADPH. FAD-binding residues include D61, R117, and L139. Residues Q192 and R213 each coordinate substrate. FAD is bound by residues D311 and 321-324; that span reads GQGV.

The protein belongs to the aromatic-ring hydroxylase family. TetX subfamily. In terms of assembly, monomer. It depends on FAD as a cofactor.

The protein resides in the cytoplasm. The enzyme catalyses a tetracycline + NADPH + O2 + H(+) = an 11a-hydroxytetracycline + NADP(+) + H2O. It carries out the reaction tetracycline + NADPH + O2 + H(+) = 11a-hydroxytetracycline + NADP(+) + H2O. It catalyses the reaction tigecycline + NADPH + O2 + H(+) = 11a-hydroxytigecycline + NADP(+) + H2O. The catalysed reaction is oxytetracycline + NADPH + O2 + H(+) = 11a-hydroxy-oxytetracycline + NADP(+) + H2O. With respect to regulation, anhydrotetracycline, a poor substrate, prevents tetracycline degradation in vitro. An FAD-requiring monooxygenase active on tetracycline antibiotic derivatives, which leads to their inactivation. Hydroxylates carbon 11a of oxytetracycline and tigecycline. Acts on many tetracycline analogs (chlorotetracycline, demeclocycline, doxycycline, minocycline, oxytetracyclinee), probably by monooxygenization. Tigecycline, a new generation tetracycline antibiotic, is rendered less effective against E.coli by this monooxygenation, is much weaker at inhibiting translation in vitro and binds Mg(2+) considerably less well. Expression in E.coli BW25113 reduces its growth rate about 5%. The reaction probably proceeds by FAD reduction by NADPH and, second, hydroxylation of antibiotic in a ping-pong mechanism. Degrades chlortetracycline, probably by monooxygenation. Slowly oxidizes anhydrotetracycline, the final substrate in tetracycline biosynthesis. The chain is Flavin-dependent monooxygenase from Bacteroides thetaiotaomicron.